Reading from the N-terminus, the 308-residue chain is Probable manganese-dependent inorganic pyrophosphatase (308 aa).

Positions 9, 13, 15, 75, 97, and 149 each coordinate Mn(2+).

It belongs to the PPase class C family. Mn(2+) serves as cofactor.

It localises to the cytoplasm. It carries out the reaction diphosphate + H2O = 2 phosphate + H(+). The protein is Probable manganese-dependent inorganic pyrophosphatase of Listeria innocua serovar 6a (strain ATCC BAA-680 / CLIP 11262).